Reading from the N-terminus, the 480-residue chain is ATP synthase subunit beta (480 aa).

153 to 160 is an ATP binding site; sequence GGAGVGKT.

Belongs to the ATPase alpha/beta chains family. In terms of assembly, F-type ATPases have 2 components, CF(1) - the catalytic core - and CF(0) - the membrane proton channel. CF(1) has five subunits: alpha(3), beta(3), gamma(1), delta(1), epsilon(1). CF(0) has three main subunits: a(1), b(2) and c(9-12). The alpha and beta chains form an alternating ring which encloses part of the gamma chain. CF(1) is attached to CF(0) by a central stalk formed by the gamma and epsilon chains, while a peripheral stalk is formed by the delta and b chains.

The protein localises to the cell membrane. The catalysed reaction is ATP + H2O + 4 H(+)(in) = ADP + phosphate + 5 H(+)(out). Produces ATP from ADP in the presence of a proton gradient across the membrane. The catalytic sites are hosted primarily by the beta subunits. The protein is ATP synthase subunit beta of Lactobacillus johnsonii (strain CNCM I-12250 / La1 / NCC 533).